Reading from the N-terminus, the 479-residue chain is Endosomal/lysosomal proton channel TMEM175 (479 aa).

A disordered region spans residues 1–26 (MSGPQAPEPTLEGQADASAGSPDEDA). Residues 1-33 (MSGPQAPEPTLEGQADASAGSPDEDAAEGIQHS) are Cytoplasmic-facing. The chain crosses the membrane as a helical span at residues 34-56 (HRMLSFSDALLSIIATVMEFDKS). Positions 35–41 (RMLSFSD) match the RxxxFSD motif 1 motif. The interval 52–58 (EFDKSVQ) is short helix H2-1. The Lumenal segment spans residues 57–64 (VQRLLATR). A helical membrane pass occupies residues 65-87 (IAVYLMTFLIVTVAWAAHTRLFQ). The Cytoplasmic portion of the chain corresponds to 88-93 (VVGKID). A helical transmembrane segment spans residues 94–103 (DTLALLNLFS). Over 104 to 113 (LMVTFPEVPL) the chain is Lumenal. Residues 114–135 (GIFLFCMCVIAIGAVQALIVLY) form a helical membrane-spanning segment. Over 136-159 (AFHFPHLLSPQIERSAHRGLYRQR) the chain is Cytoplasmic. A helical membrane pass occupies residues 160-180 (VLGIIVRGPALCLAAAGFSLF). Residues 181–185 (FYPAS) lie on the Lumenal side of the membrane. Residues 186 to 205 (YLLMAMVIVLPHVSKAAGWC) traverse the membrane as a helical segment. The Cytoplasmic segment spans residues 206–232 (RAQLVGPREPPAHSVEVFTFDLHEPLS). Residues 233 to 257 (KERVEAFSDGVYAIVATLLILDICE) traverse the membrane as a helical segment. The RxxxFSD motif 2 motif lies at 235–241 (RVEAFSD). Topologically, residues 258–284 (DNVPDAKDVKEKFQGSLVAALGESGPH) are lumenal. Residues 263-271 (AKDVKEKFQ) are short helix H1-2. Positions 273–279 (SLVAALG) are short helix H2-2. A helical transmembrane segment spans residues 285–307 (FLAYFGSFATVGLLWFAHHSLFL). Residues 308 to 313 (HIRRAT) are Cytoplasmic-facing. The chain crosses the membrane as a helical span at residues 314–335 (QPMGLLNTLSLAFVGGLPLAYQ). The Lumenal segment spans residues 336-350 (QTSAFTKQPRDELES). A helical transmembrane segment spans residues 351–371 (VRISCAIIFLASIFQFAIWTT). Over 372-391 (ALLQEGETLQPSARFGGREH) the chain is Cytoplasmic. A helical membrane pass occupies residues 392 to 415 (AFMFAKLALYPCASLLAFACTCVL). The Lumenal portion of the chain corresponds to 416 to 417 (SS). Residues 418–444 (FSTAIFHAMQIAVPFAFLLLRLLVRLA) form a helical membrane-spanning segment. Over 445 to 479 (LAGLRALRGLVGPVLARPAPGAADEAQSPLLPAPC) the chain is Cytoplasmic.

The protein belongs to the TMEM175 family. As to quaternary structure, homodimer. Interacts with AKT (AKT1, AKT2 or AKT3); leading to formation of the lysoK(GF) complex, which activates the channel. Interacts with LAMP1; inhibiting the proton channel activity of TMEM175. Interacts with LAMP2; inhibiting the proton channel activity of TMEM175.

Its subcellular location is the endosome membrane. The protein resides in the lysosome membrane. The catalysed reaction is H(+)(in) = H(+)(out). The enzyme catalyses K(+)(in) = K(+)(out). Its activity is regulated as follows. Active at low pH (under pH 4.6): proton channel activity is activated by luminal side protons. Polyunsaturated fatty acids, such as arachidonic acid, also activate the channel activity. Proton channel activity is directly inhibited by LAMP1 or LAMP2, facilitating lysosomal acidification. Channel activity is activated following interaction with AKT (AKT1, AKT2 or AKT3): interaction promotes activation from closed to an open state. Activation by AKT is independent of AKT serine/threonine-protein kinase activity. Its function is as follows. Proton-activated proton channel that catalyzes proton efflux from endosomes and lysosomes to maintain a steady-state pH. Activated at low pH (under pH 4.6) by luminal side protons: selectively mediates lysosomal proton release from lysosomes, eliciting a proton leak that balances V-ATPase activity to maintain pH homeostasis. Regulation of lumenal pH stability is required for autophagosome-lysosome fusion. Also acts as a potassium channel at higher pH, regulating potassium conductance in endosomes and lysosomes. Constitutes the pore-forming subunit of the lysoK(GF) complex, a complex activated by extracellular growth factors. The lysoK(GF) complex is composed of TMEM175 and AKT (AKT1, AKT2 or AKT3), a major target of growth factor receptors: in the complex, TMEM175 channel is opened by conformational changes by AKT, leading to its activation. The lysoK(GF) complex is required to protect neurons against stress-induced damage. This chain is Endosomal/lysosomal proton channel TMEM175, found in Bos taurus (Bovine).